The chain runs to 467 residues: Mitochondrial adenyl nucleotide antiporter SLC25A23 (467 aa).

Positions 1–148 (MRGGSSDAER…DHFLLHSLEN (148 aa)) are regulatory N-terminal domain. Topologically, residues 1 to 187 (MRGGSSDAER…EKLTGMWWKQ (187 aa)) are mitochondrial intermembrane. 3 consecutive EF-hand domains span residues 9-44 (ERRQ…LGRG), 76-111 (EREQ…LGIS), and 112-147 (ISLE…HSLE). Ca(2+) contacts are provided by Asp22, Asn24, Asp26, Arg28, and Glu33. The segment at 39–61 (ARLGRGDPDRAQQGVSSDWDADP) is disordered. Residues Asp89, Asn91, Asp93, His95, and Glu100 each contribute to the Ca(2+) site. The interval 149–158 (VEDVLYFWKH) is linker region. The segment at 164–467 (IGECLTVPDE…MKQALGVTSR (304 aa)) is C-terminal transmembrane transporter domain. 3 Solcar repeats span residues 182–268 (GMWW…IKRA), 276–361 (LHVQ…LKNR), and 373–461 (PGIL…MKQA). Residues 188–205 (LVAGAVAGAVSRTGTAPL) traverse the membrane as a helical segment. Topologically, residues 206 to 242 (DRLKVFMQVHASKSNRLNILGGLRNMIQEGGVLSLWR) are mitochondrial matrix. A helical membrane pass occupies residues 243-262 (GNGINVLKIAPESAIKFMAY). Residues 263–285 (EQIKRAIRGQQETLHVQERFVAG) are Mitochondrial intermembrane-facing. A helical transmembrane segment spans residues 286–299 (SLAGATAQTIIYPM). Over 300-335 (EVLKTRLTLRRTGQYKGLLDCAKRILEREGPRAFYR) the chain is Mitochondrial matrix. The helical transmembrane segment at 336–355 (GYLPNVLGIIPYAGIDLAVY) threads the bilayer. Residues 356-378 (ETLKNRWLQQYSHESANPGILVL) are Mitochondrial intermembrane-facing. Residues 379–396 (LGCGTISSTCGQIASYPL) form a helical membrane-spanning segment. Residues 397-435 (ALVRTRMQAQASIEGGPQVSMVGLLRHILSQEGVWGLYR) lie on the Mitochondrial matrix side of the membrane. Residues 436 to 455 (GIAPNFMKVIPAVSISYVVY) form a helical membrane-spanning segment. At 456 to 467 (ENMKQALGVTSR) the chain is on the mitochondrial intermembrane side.

It belongs to the mitochondrial carrier (TC 2.A.29) family. Interacts with MCU. Interacts with MICU1.

It localises to the mitochondrion inner membrane. The enzyme catalyses Mg(2+)(out) + phosphate(in) + ATP(out) = Mg(2+)(in) + phosphate(out) + ATP(in). It carries out the reaction ADP(out) + phosphate(in) + H(+)(out) = ADP(in) + phosphate(out) + H(+)(in). The catalysed reaction is AMP(out) + phosphate(in) = AMP(in) + phosphate(out). It catalyses the reaction phosphate(in) + ATP(out) + 2 H(+)(out) = phosphate(out) + ATP(in) + 2 H(+)(in). The enzyme catalyses dADP(in) + ADP(out) = dADP(out) + ADP(in). It carries out the reaction Mg(2+)(in) + ADP(out) + ATP(in) + H(+)(out) = Mg(2+)(out) + ADP(in) + ATP(out) + H(+)(in). The catalysed reaction is ADP(out) + diphosphate(in) = ADP(in) + diphosphate(out). It catalyses the reaction dAMP(in) + ADP(out) + H(+)(out) = dAMP(out) + ADP(in) + H(+)(in). The enzyme catalyses 3'-AMP(in) + ADP(out) + H(+)(out) = 3'-AMP(out) + ADP(in) + H(+)(in). It carries out the reaction dAMP(out) + phosphate(in) = dAMP(in) + phosphate(out). The catalysed reaction is 3'-AMP(out) + phosphate(in) = 3'-AMP(in) + phosphate(out). It catalyses the reaction dADP(out) + phosphate(in) + H(+)(out) = dADP(in) + phosphate(out) + H(+)(in). With respect to regulation, activated by an increase in cytosolic calcium levels that induce a conformational change of the N-terminal regulatory domain, uncapping the channel and allowing transport. Functionally, electroneutral antiporter that mediates the transport of adenine nucleotides through the inner mitochondrial membrane. Originally identified as an ATP-magnesium/inorganic phosphate antiporter, it also acts as a broad specificity adenyl nucleotide antiporter. By regulating the mitochondrial matrix adenine nucleotide pool could adapt to changing cellular energetic demands and indirectly regulate adenine nucleotide-dependent metabolic pathways. Also acts as a regulator of mitochondrial calcium uptake and can probably transport trace amounts of other divalent metal cations in complex with ATP. In vitro, a low activity is also observed with guanyl and pyrimidine nucleotides. The sequence is that of Mitochondrial adenyl nucleotide antiporter SLC25A23 from Mus musculus (Mouse).